The primary structure comprises 244 residues: Venom nerve growth factor 3 (244 aa).

The first 18 residues, 1 to 18, serve as a signal peptide directing secretion; it reads MSMLCYTLIIAFLIGIWA. Positions 19–125 are excised as a propeptide; that stretch reads APKSEDNVPL…TLNRNIRAKR (107 aa). Positions 47–66 are enriched in basic and acidic residues; that stretch reads GLKTSRNTDQRHPAPKKAED. The segment at 47–67 is disordered; the sequence is GLKTSRNTDQRHPAPKKAEDQ. 3 disulfide bridges follow: C139–C205, C181–C233, and C193–C235.

The protein belongs to the NGF-beta family. Homodimer; non-covalently linked. In terms of tissue distribution, expressed by the venom gland.

Its subcellular location is the secreted. Functionally, nerve growth factor is important for the development and maintenance of the sympathetic and sensory nervous systems. It stimulates division and differentiation of sympathetic and embryonic sensory neurons as well as basal forebrain cholinergic neurons in the brain. Its relevance in the snake venom is not clear. However, it has been shown to inhibit metalloproteinase-dependent proteolysis of platelet glycoprotein Ib alpha, suggesting a metalloproteinase inhibition to prevent metalloprotease autodigestion and/or protection against prey proteases. Binds a lipid between the two protein chains in the homodimer. The lipid-bound form promotes histamine relase from mouse mast cells, contrary to the lipid-free form. In Notechis scutatus scutatus (Mainland tiger snake), this protein is Venom nerve growth factor 3.